The chain runs to 342 residues: Dihydroorotase (342 aa).

Zn(2+) is bound by residues His13 and His15. Residues His15–Arg17 and Asn41 contribute to the substrate site. Residues Lys98, His135, and His173 each contribute to the Zn(2+) site. Lys98 bears the N6-carboxylysine mark. His135 provides a ligand contact to substrate. A substrate-binding site is contributed by Leu218. Asp246 contacts Zn(2+). The active site involves Asp246. Substrate contacts are provided by His250 and Ala262.

It belongs to the metallo-dependent hydrolases superfamily. DHOase family. Class II DHOase subfamily. In terms of assembly, homodimer. It depends on Zn(2+) as a cofactor.

It catalyses the reaction (S)-dihydroorotate + H2O = N-carbamoyl-L-aspartate + H(+). Its pathway is pyrimidine metabolism; UMP biosynthesis via de novo pathway; (S)-dihydroorotate from bicarbonate: step 3/3. In terms of biological role, catalyzes the reversible cyclization of carbamoyl aspartate to dihydroorotate. The polypeptide is Dihydroorotase (Photobacterium profundum (strain SS9)).